We begin with the raw amino-acid sequence, 249 residues long: Probable transcriptional regulatory protein LBJ_0543 (249 aa).

It belongs to the TACO1 family.

It localises to the cytoplasm. The polypeptide is Probable transcriptional regulatory protein LBJ_0543 (Leptospira borgpetersenii serovar Hardjo-bovis (strain JB197)).